The chain runs to 226 residues: Ribonuclease 3 (226 aa).

Positions leucine 7–asparagine 129 constitute an RNase III domain. Glutamate 42 provides a ligand contact to Mg(2+). Aspartate 46 is an active-site residue. Residues aspartate 115 and glutamate 118 each coordinate Mg(2+). The active site involves glutamate 118. Residues aspartate 156–lysine 226 form the DRBM domain.

This sequence belongs to the ribonuclease III family. Homodimer. Requires Mg(2+) as cofactor.

It is found in the cytoplasm. The catalysed reaction is Endonucleolytic cleavage to 5'-phosphomonoester.. In terms of biological role, digests double-stranded RNA. Involved in the processing of primary rRNA transcript to yield the immediate precursors to the large and small rRNAs (23S and 16S). Processes some mRNAs, and tRNAs when they are encoded in the rRNA operon. Processes pre-crRNA and tracrRNA of type II CRISPR loci if present in the organism. The polypeptide is Ribonuclease 3 (Shewanella denitrificans (strain OS217 / ATCC BAA-1090 / DSM 15013)).